Consider the following 325-residue polypeptide: Tetraacyldisaccharide 4'-kinase (325 aa).

Residue 55–62 (TAGGNGKT) coordinates ATP.

Belongs to the LpxK family.

It catalyses the reaction a lipid A disaccharide + ATP = a lipid IVA + ADP + H(+). The protein operates within glycolipid biosynthesis; lipid IV(A) biosynthesis; lipid IV(A) from (3R)-3-hydroxytetradecanoyl-[acyl-carrier-protein] and UDP-N-acetyl-alpha-D-glucosamine: step 6/6. In terms of biological role, transfers the gamma-phosphate of ATP to the 4'-position of a tetraacyldisaccharide 1-phosphate intermediate (termed DS-1-P) to form tetraacyldisaccharide 1,4'-bis-phosphate (lipid IVA). This chain is Tetraacyldisaccharide 4'-kinase, found in Enterobacter sp. (strain 638).